A 342-amino-acid chain; its full sequence is UDP-3-O-acylglucosamine N-acyltransferase (342 aa).

The active-site Proton acceptor is the His-243.

The protein belongs to the transferase hexapeptide repeat family. LpxD subfamily. In terms of assembly, homotrimer.

It catalyses the reaction a UDP-3-O-[(3R)-3-hydroxyacyl]-alpha-D-glucosamine + a (3R)-hydroxyacyl-[ACP] = a UDP-2-N,3-O-bis[(3R)-3-hydroxyacyl]-alpha-D-glucosamine + holo-[ACP] + H(+). It participates in bacterial outer membrane biogenesis; LPS lipid A biosynthesis. In terms of biological role, catalyzes the N-acylation of UDP-3-O-acylglucosamine using 3-hydroxyacyl-ACP as the acyl donor. Is involved in the biosynthesis of lipid A, a phosphorylated glycolipid that anchors the lipopolysaccharide to the outer membrane of the cell. In Coxiella burnetii (strain CbuK_Q154) (Coxiella burnetii (strain Q154)), this protein is UDP-3-O-acylglucosamine N-acyltransferase.